A 956-amino-acid polypeptide reads, in one-letter code: Chromatin assembly factor 1 subunit A (956 aa).

The binds to PCNA stretch occupies residues 1 to 49 (MLEELECGAPGARGAATAMDCKDRPAFPVKKLIQARLPFKRLNLVPKGK). Positions 1–314 (MLEELECGAP…QHSSTSPFPT (314 aa)) are binds to CBX1 chromo shadow domain. 2 disordered regions span residues 45–65 (VPKGKADDMSDDQGTSVQSKS) and 122–155 (DSNEQPDSLVDHNKLNSEASPSREAINGQREDTG). Residues 56-65 (DQGTSVQSKS) show a composition bias toward polar residues. 5 positions are modified to phosphoserine: Ser65, Ser123, Ser138, Ser141, and Ser143. A Glycyl lysine isopeptide (Lys-Gly) (interchain with G-Cter in SUMO1); alternate cross-link involves residue Lys182. Residue Lys182 forms a Glycyl lysine isopeptide (Lys-Gly) (interchain with G-Cter in SUMO2); alternate linkage. The tract at residues 188–222 (VGCGGAGRRGDSQECSPRSCPELTSGPRMCPRKEQ) is disordered. Phosphoserine occurs at positions 206 and 224. The PxVxL motif signature appears at 233 to 246 (FKGKVPMVVLQDIL). Disordered regions lie at residues 250–432 (PPQI…KRLR) and 599–639 (DSDE…VPHG). 2 stretches are compositionally biased toward low complexity: residues 282–296 (LSHSSLSSPSSTSSP) and 307–317 (SSTSPFPTSTP). Phosphoserine is present on Ser310. The segment covering 329–432 (STEKNKLRLQ…RKKEEEKRLR (104 aa)) has biased composition (basic and acidic residues). 2 stretches are compositionally biased toward acidic residues: residues 599 to 610 (DSDEEWEEEEPG) and 618 to 633 (GDDDDDMGEDEDEDDG). The necessary for homodimerization and competence for chromatin assembly stretch occupies residues 642–678 (SEDEGVTEECADPENHKVRQKLKAKEWDEFLAKGKRF). The segment at 660–956 (RQKLKAKEWD…TLTASPLGAS (297 aa)) is binds to p60. Phosphothreonine is present on Thr722. The segment at 765-790 (LLSNHTGSPRSPSTTYLHTPTPSEDA) is disordered. Residues 767-786 (SNHTGSPRSPSTTYLHTPTP) show a composition bias toward polar residues. Ser772, Ser775, and Ser803 each carry phosphoserine. 2 disordered regions span residues 844–873 (SVPSAPKEDSGSVPSTGPSQGTPISLKRKS) and 933–956 (SGAGGGVGVDTGKATLTASPLGAS). Over residues 855-866 (SVPSTGPSQGTP) the composition is skewed to polar residues. Residue Thr865 is modified to Phosphothreonine. Phosphoserine is present on residues Ser868, Ser873, and Ser951.

The protein belongs to the CHAF1A family. Homodimer. Part of the CAF-1 complex that contains RBBP4, CHAF1B and CHAF1A. CHAF1A binds directly to CHAF1B. Only minor amounts of RBBP4 are complexed with CHAF1A and CHAF1B in G1 phase. Interacts with PCNA; the interaction is direct. Interacts (via the PxVxL motif) with CBX5; the interaction is direct. Interacts with MBD1. Interacts with histones H3.1, H3.2 and H3.1t.

Its subcellular location is the nucleus. In terms of biological role, acts as a component of the histone chaperone complex chromatin assembly factor 1 (CAF-1), which assembles histone octamers onto DNA during replication and repair. CAF-1 performs the first step of the nucleosome assembly process, bringing newly synthesized histones H3 and H4 to replicating DNA; histones H2A/H2B can bind to this chromatin precursor subsequent to DNA replication to complete the histone octamer. It may play a role in heterochromatin maintenance in proliferating cells by bringing newly synthesized cbx proteins to heterochromatic DNA replication foci. The chain is Chromatin assembly factor 1 subunit A from Homo sapiens (Human).